The sequence spans 159 residues: Phosphopantetheine adenylyltransferase (159 aa).

Residue Thr-10 participates in substrate binding. Residues Thr-10–Phe-11 and His-18 contribute to the ATP site. Substrate is bound by residues Lys-42, Met-74, and Arg-88. ATP is bound by residues Gly-89–Arg-91, Glu-99, and Trp-124–Ser-130.

It belongs to the bacterial CoaD family. In terms of assembly, homohexamer. It depends on Mg(2+) as a cofactor.

It localises to the cytoplasm. It carries out the reaction (R)-4'-phosphopantetheine + ATP + H(+) = 3'-dephospho-CoA + diphosphate. It participates in cofactor biosynthesis; coenzyme A biosynthesis; CoA from (R)-pantothenate: step 4/5. In terms of biological role, reversibly transfers an adenylyl group from ATP to 4'-phosphopantetheine, yielding dephospho-CoA (dPCoA) and pyrophosphate. The polypeptide is Phosphopantetheine adenylyltransferase (Escherichia coli (strain UTI89 / UPEC)).